The primary structure comprises 59 residues: UPF0339 protein CC_2965 (59 aa).

It belongs to the UPF0339 family.

The chain is UPF0339 protein CC_2965 from Caulobacter vibrioides (strain ATCC 19089 / CIP 103742 / CB 15) (Caulobacter crescentus).